The primary structure comprises 678 residues: Protein MALE DISCOVERER 2 (678 aa).

The N-terminal stretch at 1 to 25 (MMGCGFHFPWFFFLIIGLQAPLSLS) is a signal peptide. Residues 26–323 (LTSQGSALLK…SKGSKHVWLY (298 aa)) are Extracellular-facing. A glycan (N-linked (GlcNAc...) asparagine) is linked at N52. LRR repeat units follow at residues 71 to 94 (KVQILDLSGYSLEGTLAPELSQLS), 95 to 117 (DLRSLILSRNHFSGGIPKEYGSF), 119 to 141 (NLEVLDLRENDLSGQIPPELSNG), and 143 to 164 (SLKHLLLSGNKFSDDMRIKIVR). Positions 247-314 (LAAEPAPSAP…KNQPQDNKQS (68 aa)) are disordered. A compositionally biased stretch (polar residues) spans 296–311 (KGSTSPDISKNQPQDN). Residues 324–344 (VVIAVASFVGLLIIVAVIFFC) traverse the membrane as a helical segment. The Cytoplasmic segment spans residues 345 to 678 (RKRAVKSIGP…ELEILSSEAT (334 aa)). The region spanning 346-651 (KRAVKSIGPW…DVAEQLKQVI (306 aa)) is the Protein kinase domain.

It belongs to the protein kinase superfamily. Ser/Thr protein kinase family. As to expression, expressed in pollen tubes and seedlings.

The protein localises to the endomembrane system. The catalysed reaction is L-seryl-[protein] + ATP = O-phospho-L-seryl-[protein] + ADP + H(+). The enzyme catalyses L-threonyl-[protein] + ATP = O-phospho-L-threonyl-[protein] + ADP + H(+). Involved in the pollen tube perception of the female signal by binding an unidentified female attractant. May be involved in the regulation of root hairs development. The polypeptide is Protein MALE DISCOVERER 2 (MDIS2) (Arabidopsis thaliana (Mouse-ear cress)).